The chain runs to 101 residues: Signal recognition particle 19 kDa protein (101 aa).

It belongs to the SRP19 family. Part of the signal recognition particle protein translocation system, which is composed of SRP and FtsY. Archaeal SRP consists of a 7S RNA molecule of 300 nucleotides and two protein subunits: SRP54 and SRP19.

It localises to the cytoplasm. Functionally, involved in targeting and insertion of nascent membrane proteins into the cytoplasmic membrane. Binds directly to 7S RNA and mediates binding of the 54 kDa subunit of the SRP. The protein is Signal recognition particle 19 kDa protein of Methanosarcina barkeri (strain Fusaro / DSM 804).